The following is a 137-amino-acid chain: Nucleoside diphosphate kinase (137 aa).

Lysine 10, phenylalanine 58, arginine 86, threonine 92, arginine 103, and asparagine 113 together coordinate ATP. Histidine 116 functions as the Pros-phosphohistidine intermediate in the catalytic mechanism.

It belongs to the NDK family. As to quaternary structure, homotetramer. Mg(2+) is required as a cofactor.

It is found in the cytoplasm. It catalyses the reaction a 2'-deoxyribonucleoside 5'-diphosphate + ATP = a 2'-deoxyribonucleoside 5'-triphosphate + ADP. The catalysed reaction is a ribonucleoside 5'-diphosphate + ATP = a ribonucleoside 5'-triphosphate + ADP. Major role in the synthesis of nucleoside triphosphates other than ATP. The ATP gamma phosphate is transferred to the NDP beta phosphate via a ping-pong mechanism, using a phosphorylated active-site intermediate. This Helicobacter pylori (strain P12) protein is Nucleoside diphosphate kinase.